The chain runs to 156 residues: Phosphopantetheine adenylyltransferase (156 aa).

A substrate-binding site is contributed by S9. ATP is bound by residues 9-10 (SF) and H17. Substrate is bound by residues K41, I74, and K88. ATP is bound by residues 89-91 (GLR), E99, and 123-129 (LLHVSSS).

The protein belongs to the bacterial CoaD family. As to quaternary structure, homohexamer. Mg(2+) is required as a cofactor.

Its subcellular location is the cytoplasm. The enzyme catalyses (R)-4'-phosphopantetheine + ATP + H(+) = 3'-dephospho-CoA + diphosphate. Its pathway is cofactor biosynthesis; coenzyme A biosynthesis; CoA from (R)-pantothenate: step 4/5. Reversibly transfers an adenylyl group from ATP to 4'-phosphopantetheine, yielding dephospho-CoA (dPCoA) and pyrophosphate. In Kocuria rhizophila (strain ATCC 9341 / DSM 348 / NBRC 103217 / DC2201), this protein is Phosphopantetheine adenylyltransferase.